A 336-amino-acid chain; its full sequence is Tyrosine phosphatase-like protein H1 (336 aa).

The 269-residue stretch at 27 to 295 (IKKEHHKLMK…EICYRVLCEA (269 aa)) folds into the Tyrosine-protein phosphatase domain.

This sequence belongs to the protein-tyrosine phosphatase family.

The chain is Tyrosine phosphatase-like protein H1 (H1) from Microplitis demolitor (Parasitoid wasp).